Consider the following 282-residue polypeptide: Probable protein phosphatase 2C 45 (282 aa).

Positions 27–272 constitute a PPM-type phosphatase domain; sequence SYGYASSPGK…DNITCVVVRF (246 aa). Mn(2+) is bound by residues Asp-63, Gly-64, Asp-224, and Asp-263.

It belongs to the PP2C family. Requires Mg(2+) as cofactor. The cofactor is Mn(2+).

The enzyme catalyses O-phospho-L-seryl-[protein] + H2O = L-seryl-[protein] + phosphate. It catalyses the reaction O-phospho-L-threonyl-[protein] + H2O = L-threonyl-[protein] + phosphate. This Oryza sativa subsp. japonica (Rice) protein is Probable protein phosphatase 2C 45.